The following is a 252-amino-acid chain: Small ribosomal subunit protein uS3 (252 aa).

One can recognise a KH type-2 domain in the interval 16 to 85 (IDEYLETKLE…NPQVEVKEVD (70 aa)). The disordered stretch occupies residues 233 to 252 (EESEIEEITEEIEDVETLEE).

This sequence belongs to the universal ribosomal protein uS3 family. As to quaternary structure, part of the 30S ribosomal subunit.

Functionally, binds the lower part of the 30S subunit head. This is Small ribosomal subunit protein uS3 from Methanosphaera stadtmanae (strain ATCC 43021 / DSM 3091 / JCM 11832 / MCB-3).